The following is a 441-amino-acid chain: 4-hydroxybenzoate polyprenyltransferase, mitochondrial (441 aa).

The transit peptide at 1–95 (MLRKLTSNSS…TLGELVLRDY (95 aa)) directs the protein to the mitochondrion. 8 consecutive transmembrane segments (helical) span residues 129 to 149 (IGSW…APAG), 154 to 174 (LWTL…GCTI), 204 to 224 (AWFF…ELNW), 225 to 245 (YSIV…LMKR), 246 to 266 (ITHW…LLGW), 271 to 291 (GSVM…WTIV), 322 to 342 (LWLS…GMVC), and 378 to 398 (FISN…GTLY). A disordered region spans residues 405–441 (AGKSSTTSSSSTSSSSSPSSGLLLAATNHHQPARQAS). The segment covering 408-424 (SSTTSSSSTSSSSSPSS) has biased composition (low complexity). The segment covering 432-441 (NHHQPARQAS) has biased composition (polar residues).

It belongs to the UbiA prenyltransferase family. The cofactor is Mg(2+).

It localises to the mitochondrion inner membrane. It catalyses the reaction an all-trans-polyprenyl diphosphate + 4-hydroxybenzoate = a 4-hydroxy-3-(all-trans-polyprenyl)benzoate + diphosphate. It participates in cofactor biosynthesis; ubiquinone biosynthesis. In terms of biological role, catalyzes the prenylation of para-hydroxybenzoate (PHB) with an all-trans polyprenyl group. Mediates the second step in the final reaction sequence of coenzyme Q (CoQ) biosynthesis, which is the condensation of the polyisoprenoid side chain with PHB, generating the first membrane-bound Q intermediate. This is 4-hydroxybenzoate polyprenyltransferase, mitochondrial from Aedes aegypti (Yellowfever mosquito).